The following is a 116-amino-acid chain: Putative iron-sulfur cluster insertion protein ErpA (116 aa).

C44, C108, and C110 together coordinate iron-sulfur cluster.

This sequence belongs to the HesB/IscA family. In terms of assembly, homodimer. Iron-sulfur cluster is required as a cofactor.

In terms of biological role, required for insertion of 4Fe-4S clusters. The sequence is that of Putative iron-sulfur cluster insertion protein ErpA from Janthinobacterium sp. (strain Marseille) (Minibacterium massiliensis).